The sequence spans 393 residues: Putative N(4)-(beta-N-acetylglucosaminyl)-L-asparaginase GH22932 (393 aa).

The disordered stretch occupies residues 15-41 (ALKPITNSSSDTITPNPNLITTSRGSS). Over residues 19–41 (ITNSSSDTITPNPNLITTSRGSS) the composition is skewed to polar residues. 2 disulfide bridges follow: Cys100-Cys105 and Cys199-Cys215. Catalysis depends on Thr246, which acts as the Nucleophile. Substrate-binding positions include 274–277 (RVGD) and 297–300 (TGDG). The cysteines at positions 357 and 381 are disulfide-linked.

The protein belongs to the Ntn-hydrolase family. Heterotetramer of two alpha and two beta chains arranged as a dimer of alpha/beta heterodimers. In terms of processing, cleaved into an alpha and beta chain by autocatalysis; this activates the enzyme. The N-terminal residue of the beta subunit is responsible for the nucleophile hydrolase activity.

The enzyme catalyses N(4)-(beta-N-acetyl-D-glucosaminyl)-L-asparagine + H2O = N-acetyl-beta-D-glucosaminylamine + L-aspartate + H(+). Its function is as follows. Cleaves the GlcNAc-Asn bond which joins oligosaccharides to the peptide of asparagine-linked glycoproteins. The polypeptide is Putative N(4)-(beta-N-acetylglucosaminyl)-L-asparaginase GH22932 (Drosophila grimshawi (Hawaiian fruit fly)).